We begin with the raw amino-acid sequence, 318 residues long: Ribose-phosphate pyrophosphokinase 2 (318 aa).

Residue 96–101 (RQDKKD) participates in ATP binding. Mg(2+)-binding residues include Asp-128, His-130, Asp-139, and Asp-143. His-130 contacts ATP. Positions 212–227 (KDRVAILVDDMADTCG) are binding of phosphoribosylpyrophosphate.

The protein belongs to the ribose-phosphate pyrophosphokinase family. In terms of assembly, homodimer. The active form is probably a hexamer composed of 3 homodimers. Mg(2+) serves as cofactor.

It carries out the reaction D-ribose 5-phosphate + ATP = 5-phospho-alpha-D-ribose 1-diphosphate + AMP + H(+). It functions in the pathway metabolic intermediate biosynthesis; 5-phospho-alpha-D-ribose 1-diphosphate biosynthesis; 5-phospho-alpha-D-ribose 1-diphosphate from D-ribose 5-phosphate (route I): step 1/1. Activated by magnesium and inorganic phosphate. Competitively or non-competitively inhibited by ADP, 2,3-bisphosphoglyceride or GDP. Catalyzes the synthesis of phosphoribosylpyrophosphate (PRPP) that is essential for nucleotide synthesis. The chain is Ribose-phosphate pyrophosphokinase 2 (prps2) from Xenopus tropicalis (Western clawed frog).